The following is a 153-amino-acid chain: MFKPHVTVACVVHAEGKFLVVEETINGKALWNQPAGHLEADETLVEAAARELWEETGISAQPQHFIRMHQWIAPDKTPFLRFLFAIELEQICPTQPHDSDIDCCRWVSAEEILQASNLRSPLVAESIRCYQSGQRYPLEMIGDFNWPFTKGVI.

The Nudix hydrolase domain maps to 3–131; that stretch reads KPHVTVACVV…LVAESIRCYQ (129 aa). A Nudix box motif is present at residues 36 to 57; it reads GHLEADETLVEAAARELWEETG.

The protein belongs to the Nudix hydrolase family. NudJ subfamily. In terms of assembly, monomer. The cofactor is Mg(2+).

The chain is Phosphatase NudJ (nudJ) from Escherichia coli O139:H28 (strain E24377A / ETEC).